The following is a 227-amino-acid chain: Type II restriction enzyme HhaII (227 aa).

As to quaternary structure, homodimer.

The enzyme catalyses Endonucleolytic cleavage of DNA to give specific double-stranded fragments with terminal 5'-phosphates.. In terms of biological role, a P subtype restriction enzyme that recognizes the double-stranded sequence 5'-GANTC-3' and cleaves after G-1. This chain is Type II restriction enzyme HhaII (hhaIIR), found in Haemophilus parahaemolyticus.